The sequence spans 346 residues: Immunoglobulin heavy constant alpha (346 aa).

Ig-like domains lie at P6–D96, P118–T212, and P221–D323. A disulfide bridge links C26 with C83. N134 is a glycosylation site (N-linked (GlcNAc...) (complex) asparagine). Cystine bridges form between C139/C196 and C243/C306. N-linked (GlcNAc...) (complex) asparagine glycosylation occurs at N333.

As to quaternary structure, immunoglobulins are composed of two identical heavy chains and two identical light chains; disulfide-linked. Monomeric or polymeric. Part of the secretory IgA (sIgA) complex that consists of two, four or five IgA monomers, and two additional non-Ig polypeptides, namely the JCHAIN and the secretory component (the proteolytic product of PIGR). N-glycosylated. N-glycans attached to Asn-134 varies from differentially fucosylated complex and hybrid to sialylated with N-glycoyl neuraminic acid types: GlcNAc2Man3GlcNAc2(Fuc); GlcNAc1Man4GlcNAc2(Fuc); GlcNAc1Man4GlcNAc2; Gal1GlcNAc2Man3GlcNAc2(Fuc); GlcNAc2Man3GlcNAc2; Gal1GlcNAc2Man3GlcNAc2; GlcNAc1Man3GlcNAc2; GlcNAc1Man2GlcNAc2 and NeuGc1Gal1GlcNAc2Man3GlcNAc2(Fuc). N-glycans attached to Asn-333 are mainly fucosylated complex types: GlcNAc2Man3GlcNAc2; GlcNAc1Man3GlcNAc2; GlcNAc1Man3GlcNAc2(Fuc); GlcNAc2Man3GlcNAc2(Fuc); Gal1GlcNAc2Man3GlcNAc2(Fuc); NeuGc1Gal1GlcNAc1Man3GlcNAc2(Fuc); NeuGc1Gal1GlcNAc2Man3GlcNAc2(Fuc) and NeuAc1Gal1GlcNAc2Man3GlcNAc2(Fuc).

The protein localises to the secreted. It localises to the cell membrane. In terms of biological role, constant region of immunoglobulin heavy chains. Immunoglobulins, also known as antibodies, are membrane-bound or secreted glycoproteins produced by B lymphocytes. In the recognition phase of humoral immunity, the membrane-bound immunoglobulins serve as receptors which, upon binding of a specific antigen, trigger the clonal expansion and differentiation of B lymphocytes into immunoglobulins-secreting plasma cells. Secreted immunoglobulins mediate the effector phase of humoral immunity, which results in the elimination of bound antigens. The antigen binding site is formed by the variable domain of one heavy chain, together with that of its associated light chain. Thus, each immunoglobulin has two antigen binding sites with remarkable affinity for a particular antigen. The variable domains are assembled by a process called V-(D)-J rearrangement and can then be subjected to somatic hypermutations which, after exposure to antigen and selection, allow affinity maturation for a particular antigen. Ig alpha is the major immunoglobulin class in body secretions. The polypeptide is Immunoglobulin heavy constant alpha (IGHA) (Equus asinus (Donkey)).